We begin with the raw amino-acid sequence, 453 residues long: Plasticin (453 aa).

The head stretch occupies residues 1–51 (MSHSTFSHLFSPHFGAPVYSPVSSRIGGRYVSSSVPTRSVDFRSRSSAPAP). Residues 71 to 112 (FATRSNEKRELQELNDRFASFIEKVRHLEQQNSKLILELGQY) are coil 1A. Residues 77–390 (EKRELQELND…KLLEGEENRI (314 aa)) enclose the IF rod domain. The interval 113–126 (KDQHQGSTGRINEL) is linker 1. Positions 127 to 222 (CQQEMRELRR…KMHDEEIQDV (96 aa)) are coil 1B. The interval 223–245 (QVSVQSQQMKMEVMETSSRPDLT) is linker 12. Residues 246-391 (GALRDIRAQY…LLEGEENRIV (146 aa)) form a coil 2 region. The segment at 392–453 (VPIMKMPSMS…KKDSHGQGKD (62 aa)) is tail. A disordered region spans residues 421-453 (IKTVETRDGEVVKESTKEKGRDEKKDSHGQGKD). The segment covering 424 to 453 (VETRDGEVVKESTKEKGRDEKKDSHGQGKD) has biased composition (basic and acidic residues).

The protein belongs to the intermediate filament family. In terms of tissue distribution, optic nerve.

Its function is as follows. Type III neurofilament. The chain is Plasticin from Carassius auratus (Goldfish).